The primary structure comprises 177 residues: Alkyl hydroperoxide reductase AhpD (177 aa).

The active-site Proton donor is Cys-131. Residues Cys-131 and Cys-134 are joined by a disulfide bond. The Cysteine sulfenic acid (-SOH) intermediate role is filled by Cys-134.

The protein belongs to the AhpD family. Homotrimer.

The enzyme catalyses N(6)-[(R)-dihydrolipoyl]-L-lysyl-[lipoyl-carrier protein] + a hydroperoxide = N(6)-[(R)-lipoyl]-L-lysyl-[lipoyl-carrier protein] + an alcohol + H2O. Functionally, antioxidant protein with alkyl hydroperoxidase activity. Required for the reduction of the AhpC active site cysteine residues and for the regeneration of the AhpC enzyme activity. The protein is Alkyl hydroperoxide reductase AhpD of Streptomyces griseus subsp. griseus (strain JCM 4626 / CBS 651.72 / NBRC 13350 / KCC S-0626 / ISP 5235).